Consider the following 560-residue polypeptide: Membrane protein insertase YidC (560 aa).

Helical transmembrane passes span 5-25, 334-354, 357-377, 431-451, 476-496, and 522-542; these read IINL…WQYF, AIDF…MNFF, YVGN…LLMF, LPIL…YVTI, LFGL…WPIL, and FMPL…LIYW.

Belongs to the OXA1/ALB3/YidC family. Type 1 subfamily. Interacts with the Sec translocase complex via SecD. Specifically interacts with transmembrane segments of nascent integral membrane proteins during membrane integration.

The protein resides in the cell inner membrane. Required for the insertion and/or proper folding and/or complex formation of integral membrane proteins into the membrane. Involved in integration of membrane proteins that insert both dependently and independently of the Sec translocase complex, as well as at least some lipoproteins. Aids folding of multispanning membrane proteins. The chain is Membrane protein insertase YidC from Rickettsia massiliae (strain Mtu5).